The chain runs to 388 residues: Muscleblind-like protein 1 (388 aa).

Thr6 is subject to Phosphothreonine. 4 consecutive C3H1-type zinc fingers follow at residues 13–41, 47–73, 179–207, and 215–241; these read WLTL…HPSK, NGRV…HPPP, TDRL…HPAD, and DNTV…HPPA.

Belongs to the muscleblind family. As to quaternary structure, interacts with DDX1 and YBX1. Interacts with HNRNPH1; the interaction in RNA-independent. Interacts with RBPMS; the interaction allows cooperative assembly of RNA-bound stable cell-specific alternative splicing regulatory complexes. As to expression, highly expressed in cardiac, skeletal muscle and during myoblast differentiation. Weakly expressed in other tissues (at protein level). Expressed in heart, brain, placenta, lung, liver, skeletal muscle, kidney and pancreas.

The protein localises to the nucleus. It is found in the cytoplasm. It localises to the cytoplasmic granule. In terms of biological role, mediates pre-mRNA alternative splicing regulation. Acts either as activator or repressor of splicing on specific pre-mRNA targets. Inhibits cardiac troponin-T (TNNT2) pre-mRNA exon inclusion but induces insulin receptor (IR) pre-mRNA exon inclusion in muscle. Antagonizes the alternative splicing activity pattern of CELF proteins. Regulates the TNNT2 exon 5 skipping through competition with U2AF2. Inhibits the formation of the spliceosome A complex on intron 4 of TNNT2 pre-mRNA. Binds to the stem-loop structure within the polypyrimidine tract of TNNT2 intron 4 during spliceosome assembly. Binds to the 5'-YGCU(U/G)Y-3'consensus sequence. Binds to the IR RNA. Binds to expanded CUG repeat RNA, which folds into a hairpin structure containing GC base pairs and bulged, unpaired U residues. Together with RNA binding proteins RBPMS and RBFOX2, activates vascular smooth muscle cells alternative splicing events. Regulates NCOR2 alternative splicing. The protein is Muscleblind-like protein 1 (MBNL1) of Homo sapiens (Human).